Here is a 162-residue protein sequence, read N- to C-terminus: Phospholipase A and acyltransferase 3 (162 aa).

The Cytoplasmic portion of the chain corresponds to 1-133 (MRAPIPEPKP…VARSDQVRDV (133 aa)). An LRAT domain is found at 13–129 (LIEIFRPFYR…LRYGVARSDQ (117 aa)). Residues His-23 and His-35 contribute to the active site. Cys-113 serves as the catalytic Acyl-thioester intermediate. Residues 134 to 154 (IIAASAAGMGLAAMSLIGVMF) traverse the membrane as a helical segment. Topologically, residues 155 to 162 (SRNKRQKQ) are lumenal.

Belongs to the H-rev107 family. Interacts with PPP2R1A; this interaction might decrease PP2A activity.

Its subcellular location is the cell membrane. The protein resides in the cytoplasm. It is found in the cytosol. The protein localises to the perinuclear region. It localises to the peroxisome membrane. Its subcellular location is the mitochondrion membrane. The protein resides in the nucleus envelope. It is found in the lysosome membrane. The protein localises to the endoplasmic reticulum membrane. The enzyme catalyses a 1,2-diacyl-sn-glycero-3-phosphocholine + H2O = a 1-acyl-sn-glycero-3-phosphocholine + a fatty acid + H(+). It catalyses the reaction a 1,2-diacyl-sn-glycero-3-phosphocholine + H2O = a 2-acyl-sn-glycero-3-phosphocholine + a fatty acid + H(+). It carries out the reaction 1,2-dihexadecanoyl-sn-glycero-3-phosphocholine + H2O = 1-hexadecanoyl-sn-glycero-3-phosphocholine + hexadecanoate + H(+). The catalysed reaction is 1,2-dihexadecanoyl-sn-glycero-3-phosphocholine + H2O = 2-hexadecanoyl-sn-glycero-3-phosphocholine + hexadecanoate + H(+). The enzyme catalyses 1-hexadecanoyl-2-(9Z-octadecenoyl)-sn-glycero-3-phosphocholine + H2O = 2-(9Z-octadecenoyl)-sn-glycero-3-phosphocholine + hexadecanoate + H(+). It catalyses the reaction 1-hexadecanoyl-2-(9Z-octadecenoyl)-sn-glycero-3-phosphocholine + H2O = 1-hexadecanoyl-sn-glycero-3-phosphocholine + (9Z)-octadecenoate + H(+). It carries out the reaction 1-hexadecanoyl-2-(5Z,8Z,11Z,14Z-eicosatetraenoyl)-sn-glycero-3-phosphocholine + H2O = 1-hexadecanoyl-sn-glycero-3-phosphocholine + (5Z,8Z,11Z,14Z)-eicosatetraenoate + H(+). The catalysed reaction is 1-hexadecanoyl-2-(5Z,8Z,11Z,14Z-eicosatetraenoyl)-sn-glycero-3-phosphocholine + H2O = 2-(5Z,8Z,11Z,14Z)-eicosatetraenoyl-sn-glycero-3-phosphocholine + hexadecanoate + H(+). The enzyme catalyses 1-hexadecanoyl-2-(9Z,12Z-octadecadienoyl)-sn-glycero-3-phosphoethanolamine + H2O = 1-hexadecanoyl-sn-glycero-3-phosphoethanolamine + (9Z,12Z)-octadecadienoate + H(+). It catalyses the reaction 1-hexadecanoyl-2-(9Z,12Z-octadecadienoyl)-sn-glycero-3-phosphoethanolamine + H2O = 2-(9Z,12Z)-octadecadienoyl-sn-glycero-3-phosphoethanolamine + hexadecanoate + H(+). It carries out the reaction 1-hexadecanoyl-2-(5Z,8Z,11Z,14Z-eicosatetraenoyl)-sn-glycero-3-phosphoethanolamine + H2O = 1-hexadecanoyl-sn-glycero-3-phosphoethanolamine + (5Z,8Z,11Z,14Z)-eicosatetraenoate + H(+). The catalysed reaction is 1-hexadecanoyl-2-(5Z,8Z,11Z,14Z-eicosatetraenoyl)-sn-glycero-3-phosphoethanolamine + H2O = 2-(5Z,8Z,11Z,14Z)-eicosatetraenoyl-sn-glycero-3-phosphoethanolamine + hexadecanoate + H(+). The enzyme catalyses 1-hexanoyl-2-acyl-sn-glycero-3-phosphocholine + H2O = hexanoate + a 2-acyl-sn-glycero-3-phosphocholine + H(+). It catalyses the reaction 1-hexanoyl-2-acyl-sn-glycero-3-phosphocholine + H2O = 1-hexanoyl-sn-glycero-3-phosphocholine + a fatty acid + H(+). It carries out the reaction 1,2-diheptadecanoyl-sn-glycero-3-phosphoethanolamine + 1-(9Z-octadecenoyl)-2-hexadecanoyl-sn-glycero-3-phosphocholine = 1,2-diheptadecanoyl-sn-glycero-3-phospho-N-hexadecanoyl-ethanolamine + 1-(9Z-octadecenoyl)-sn-glycero-3-phosphocholine + H(+). The catalysed reaction is 1,2-diheptadecanoyl-sn-glycero-3-phosphoethanolamine + 1-(9Z-octadecenoyl)-2-hexadecanoyl-sn-glycero-3-phosphocholine = 1,2-diheptadecanoyl-sn-glycero-3-phospho-N-(9Z-octadecenoyl)-ethanolamine + 2-hexadecanoyl-sn-glycero-3-phosphocholine + H(+). The enzyme catalyses 1,2-dihexanoyl-sn-glycero-3-phosphoethanolamine + 2-heptanoyl-sn-glycero-3-phosphocholine = hexanoyl-sn-glycero-3-phosphoethanolamine + 1-hexanoyl-2-heptanoyl-sn-glycero-3-phosphocholine. It catalyses the reaction 1-hexadecanoyl-2-octadecanoyl-sn-glycero-3-phosphocholine + H2O = octadecanoate + 1-hexadecanoyl-sn-glycero-3-phosphocholine + H(+). It carries out the reaction 1-hexadecanoyl-2-octadecanoyl-sn-glycero-3-phosphocholine + H2O = 2-octadecanoyl-sn-glycero-3-phosphocholine + hexadecanoate + H(+). The catalysed reaction is 1-octadecanoyl-2-hexadecanoyl-sn-glycero-3-phosphocholine + H2O = 1-octadecanoyl-sn-glycero-3-phosphocholine + hexadecanoate + H(+). The enzyme catalyses 1-octadecanoyl-2-hexadecanoyl-sn-glycero-3-phosphocholine + H2O = 2-hexadecanoyl-sn-glycero-3-phosphocholine + octadecanoate + H(+). It catalyses the reaction 1-hexadecanoyl-2-(9Z,12Z-octadecadienoyl)-sn-glycero-3-phosphocholine + H2O = (9Z,12Z)-octadecadienoate + 1-hexadecanoyl-sn-glycero-3-phosphocholine + H(+). It carries out the reaction 1-hexadecanoyl-2-(9Z,12Z-octadecadienoyl)-sn-glycero-3-phosphocholine + H2O = 2-(9Z,12Z-octadecadienoyl)-sn-glycero-3-phosphocholine + hexadecanoate + H(+). The catalysed reaction is 1,2-di-(9Z-octadecenoyl)-sn-glycero-3-phosphocholine + H2O = 2-(9Z-octadecenoyl)-sn-glycero-3-phosphocholine + (9Z)-octadecenoate + H(+). The enzyme catalyses 1,2-dihexadecanoyl-sn-glycero-3-phosphocholine + H2O = hexadecanoyl-sn-glycero-3-phosphocholine + hexadecanoate + H(+). It catalyses the reaction 1,2-di-(9Z-octadecenoyl)-sn-glycero-3-phosphocholine + H2O = 1-(9Z-octadecenoyl)-sn-glycero-3-phosphocholine + (9Z)-octadecenoate + H(+). It carries out the reaction 1,2-di-(9Z-octadecenoyl)-sn-glycero-3-phosphoethanolamine + 1,2-dihexadecanoyl-sn-glycero-3-phosphocholine = hexadecanoyl-sn-glycero-3-phosphocholine + N-hexadecanoyl-1,2-di-(9Z-octadecenoyl)-sn-glycero-3-phosphoethanolamine + H(+). The catalysed reaction is 1,2-di-(9Z,12Z-octadecadienoyl)-sn-glycero-3-phosphocholine + H2O = 1-(9Z,12Z)-octadecadienoyl-sn-glycero-3-phosphocholine + (9Z,12Z)-octadecadienoate + H(+). Functionally, exhibits both phospholipase A1/2 and acyltransferase activities. Shows phospholipase A1 (PLA1) and A2 (PLA2), catalyzing the calcium-independent release of fatty acids from the sn-1 or sn-2 position of glycerophospholipids. For most substrates, PLA1 activity is much higher than PLA2 activity. Shows O-acyltransferase activity, catalyzing the transfer of a fatty acyl group from glycerophospholipid to the hydroxyl group of lysophospholipid. Shows N-acyltransferase activity, catalyzing the calcium-independent transfer of a fatty acyl group at the sn-1 position of phosphatidylcholine (PC) and other glycerophospholipids to the primary amine of phosphatidylethanolamine (PE), forming N-acylphosphatidylethanolamine (NAPE), which serves as precursor for N-acylethanolamines (NAEs). Exhibits high N-acyltransferase activity and low phospholipase A1/2 activity. Required for complete organelle rupture and degradation that occur during eye lens terminal differentiation, when fiber cells that compose the lens degrade all membrane-bound organelles in order to provide lens with transparency to allow the passage of light. Organelle membrane degradation is probably catalyzed by the phospholipase activity. Plays a role in phospholipid metabolism and adipogenesis. The polypeptide is Phospholipase A and acyltransferase 3 (Pongo abelii (Sumatran orangutan)).